The following is a 499-amino-acid chain: Glycerol kinase (499 aa).

Residue Thr-12 coordinates ADP. Residues Thr-12, Thr-13, and Ser-14 each contribute to the ATP site. Thr-12 contacts sn-glycerol 3-phosphate. Residue Arg-16 coordinates ADP. 4 residues coordinate sn-glycerol 3-phosphate: Arg-82, Glu-83, Tyr-134, and Asp-240. The glycerol site is built by Arg-82, Glu-83, Tyr-134, Asp-240, and Gln-241. Residues Thr-262 and Gly-306 each contribute to the ADP site. ATP-binding residues include Thr-262, Gly-306, Gln-310, and Gly-412. Residues Gly-412 and Asn-416 each contribute to the ADP site.

The protein belongs to the FGGY kinase family.

It carries out the reaction glycerol + ATP = sn-glycerol 3-phosphate + ADP + H(+). Its pathway is polyol metabolism; glycerol degradation via glycerol kinase pathway; sn-glycerol 3-phosphate from glycerol: step 1/1. With respect to regulation, inhibited by fructose 1,6-bisphosphate (FBP). Functionally, key enzyme in the regulation of glycerol uptake and metabolism. Catalyzes the phosphorylation of glycerol to yield sn-glycerol 3-phosphate. This is Glycerol kinase from Nocardia farcinica (strain IFM 10152).